A 210-amino-acid polypeptide reads, in one-letter code: ER membrane protein complex subunit 8 (210 aa).

The region spanning 4-150 (VKLTTQAYCK…IHVYEHHENR (147 aa)) is the MPN domain.

This sequence belongs to the EMC8/EMC9 family. As to quaternary structure, component of the ER membrane protein complex (EMC). EMC8 and EMC9 are mutually exclusive subunits of the EMC complex. Expressed in liver, pancreas, heart, lung, kidney, brain, skeletal muscle, and placenta. Expression levels are highest in pancreas and moderate in heart, skeletal muscle, and placenta.

Its subcellular location is the endoplasmic reticulum membrane. Part of the endoplasmic reticulum membrane protein complex (EMC) that enables the energy-independent insertion into endoplasmic reticulum membranes of newly synthesized membrane proteins. Preferentially accommodates proteins with transmembrane domains that are weakly hydrophobic or contain destabilizing features such as charged and aromatic residues. Involved in the cotranslational insertion of multi-pass membrane proteins in which stop-transfer membrane-anchor sequences become ER membrane spanning helices. It is also required for the post-translational insertion of tail-anchored/TA proteins in endoplasmic reticulum membranes. By mediating the proper cotranslational insertion of N-terminal transmembrane domains in an N-exo topology, with translocated N-terminus in the lumen of the ER, controls the topology of multi-pass membrane proteins like the G protein-coupled receptors. By regulating the insertion of various proteins in membranes, it is indirectly involved in many cellular processes. This is ER membrane protein complex subunit 8 (EMC8) from Homo sapiens (Human).